Here is a 525-residue protein sequence, read N- to C-terminus: GMP synthase [glutamine-hydrolyzing] (525 aa).

Residues 8–207 (KILILDFGSQ…ALDICQCDAN (200 aa)) enclose the Glutamine amidotransferase type-1 domain. The active-site Nucleophile is the cysteine 85. Residues histidine 181 and glutamate 183 contribute to the active site. The 193-residue stretch at 208–400 (WKPASIIEDA…LGLPYDMLYR (193 aa)) folds into the GMPS ATP-PPase domain. Residue 235–241 (SGGVDSS) coordinates ATP.

As to quaternary structure, homodimer.

It carries out the reaction XMP + L-glutamine + ATP + H2O = GMP + L-glutamate + AMP + diphosphate + 2 H(+). It functions in the pathway purine metabolism; GMP biosynthesis; GMP from XMP (L-Gln route): step 1/1. Catalyzes the synthesis of GMP from XMP. The sequence is that of GMP synthase [glutamine-hydrolyzing] from Shewanella woodyi (strain ATCC 51908 / MS32).